Consider the following 118-residue polypeptide: Large ribosomal subunit protein bL20 (118 aa).

This sequence belongs to the bacterial ribosomal protein bL20 family.

Functionally, binds directly to 23S ribosomal RNA and is necessary for the in vitro assembly process of the 50S ribosomal subunit. It is not involved in the protein synthesizing functions of that subunit. The polypeptide is Large ribosomal subunit protein bL20 (Elusimicrobium minutum (strain Pei191)).